A 33-amino-acid chain; its full sequence is Glucagon-2 (33 aa).

It belongs to the glucagon family.

It is found in the secreted. Functionally, promotes hydrolysis of glycogen and lipids, and raises the blood sugar level. This is Glucagon-2 (gcg2) from Oreochromis niloticus (Nile tilapia).